Reading from the N-terminus, the 573-residue chain is Urease subunit alpha 1 (573 aa).

Positions 136–573 (GGIDTHVHFI…LPLAQRYFLF (438 aa)) constitute a Urease domain. Residues histidine 141, histidine 143, and lysine 224 each coordinate Ni(2+). The residue at position 224 (lysine 224) is an N6-carboxylysine. Histidine 226 is a binding site for substrate. 2 residues coordinate Ni(2+): histidine 253 and histidine 279. The Proton donor role is filled by histidine 327. Aspartate 367 serves as a coordination point for Ni(2+).

Belongs to the metallo-dependent hydrolases superfamily. Urease alpha subunit family. As to quaternary structure, may form a heterohexamer of 3 UreC (alpha) and 3 UreAB (gamma/beta) subunits. May also form a heterotrimer of UreA (gamma), UreB (beta) and UreC (alpha) subunits. Three heterotrimers associate to form the active enzyme. Ni cation is required as a cofactor. In terms of processing, carboxylation allows a single lysine to coordinate two nickel ions.

The protein localises to the cytoplasm. It carries out the reaction urea + 2 H2O + H(+) = hydrogencarbonate + 2 NH4(+). It functions in the pathway nitrogen metabolism; urea degradation; CO(2) and NH(3) from urea (urease route): step 1/1. This chain is Urease subunit alpha 1, found in Streptomyces coelicolor (strain ATCC BAA-471 / A3(2) / M145).